The chain runs to 299 residues: Ribosomal RNA small subunit methyltransferase H (299 aa).

S-adenosyl-L-methionine is bound by residues glycine 36–histidine 38, aspartate 55, aspartate 103, and glutamine 110. 2 stretches are compositionally biased toward basic and acidic residues: residues lysine 268–arginine 282 and arginine 289–aspartate 299. Residues lysine 268 to aspartate 299 are disordered.

It belongs to the methyltransferase superfamily. RsmH family.

The protein resides in the cytoplasm. It catalyses the reaction cytidine(1402) in 16S rRNA + S-adenosyl-L-methionine = N(4)-methylcytidine(1402) in 16S rRNA + S-adenosyl-L-homocysteine + H(+). Specifically methylates the N4 position of cytidine in position 1402 (C1402) of 16S rRNA. The sequence is that of Ribosomal RNA small subunit methyltransferase H from Thermotoga petrophila (strain ATCC BAA-488 / DSM 13995 / JCM 10881 / RKU-1).